A 364-amino-acid chain; its full sequence is Pre-small/secreted glycoprotein (364 aa).

A signal peptide spans Met-1–Ser-32. The N-linked (GlcNAc...) asparagine; by host glycan is linked to Asn-40. 2 cysteine pairs are disulfide-bonded: Cys-108/Cys-135 and Cys-121/Cys-147. Asn-204, Asn-228, Asn-238, Asn-257, and Asn-268 each carry an N-linked (GlcNAc...) asparagine; by host glycan.

This sequence belongs to the filoviruses glycoprotein family. In terms of assembly, homodimer; disulfide-linked. The homodimers are linked by two disulfide bonds in a parallel orientation. Monomer. In terms of processing, this precursor is processed into mature sGP and delta-peptide by host furin or furin-like proteases. The cleavage site corresponds to the furin optimal cleavage sequence [KR]-X-[KR]-R. Post-translationally, N-glycosylated. O-glycosylated.

The protein resides in the secreted. Functionally, seems to possess an anti-inflammatory activity as it can reverse the barrier-decreasing effects of TNF alpha. Might therefore contribute to the lack of inflammatory reaction seen during infection in spite the of extensive necrosis and massive virus production. Does not seem to be involved in activation of primary macrophages. Does not seem to interact specifically with neutrophils. Viroporin that permeabilizes mammalian cell plasma membranes. It acts by altering permeation of ionic compounds and small molecules. This activity may lead to viral enterotoxic activity. The protein is Pre-small/secreted glycoprotein (GP) of Zaire ebolavirus (strain Gabon-94) (ZEBOV).